Consider the following 37-residue polypeptide: Large ribosomal subunit protein bL36 (37 aa).

It belongs to the bacterial ribosomal protein bL36 family.

This Brevibacillus brevis (strain 47 / JCM 6285 / NBRC 100599) protein is Large ribosomal subunit protein bL36.